The chain runs to 547 residues: Ganoderic acid synthetase CYP5150L8 (547 aa).

Residues 2 to 22 (PDSSLVLVAIAGAAYIFWLVF) form a helical membrane-spanning segment. C487 contributes to the heme binding site.

The protein belongs to the cytochrome P450 family. Heme serves as cofactor.

Its subcellular location is the membrane. It catalyses the reaction lanosterol + reduced [NADPH--hemoprotein reductase] + O2 = 26-hydroxylanosterol + oxidized [NADPH--hemoprotein reductase] + H2O + H(+). The enzyme catalyses 26-hydroxylanosterol + reduced [NADPH--hemoprotein reductase] + O2 = 26-oxolanosterol + oxidized [NADPH--hemoprotein reductase] + 2 H2O + H(+). It carries out the reaction 26-oxolanosterol + reduced [NADPH--hemoprotein reductase] + O2 = 3beta-hydroxy-lanosta-8, 24-dien-26-oate + oxidized [NADPH--hemoprotein reductase] + H2O + 2 H(+). Its pathway is secondary metabolite biosynthesis; terpenoid biosynthesis. Functionally, cytochrome P450 monooxygenase that is involved in the biosynthesis of ganoderic acids (GA), a group of highly oxygenated lanostane-type triterpenoids which well recognized as a main group of unique bioactive compounds in the medicinal mushroom Ganoderma lucidum. CYP5150L8 alone is able to catalyze the three-step oxidations at C-26 from lanosterol to 3-hydroxy-lanosta-8,24-dien-26-oic acid (also called ganoderic acid Z or HLDOA). The methyl group of lanosterol at C-26 is first oxidized into hydroxyl group to form 3-hydroxy-lanosta-8,24-dien-26-ol (HLDO). The hydroxyl group at C-26 of HLDO is further converted into a formyl group to form 3-hydroxy-lanosta-8,24-dien-26-al (HLDA). Finally, the formyl group is oxidized into a carboxyl group to produce 3-hydroxy-lanosta-8,24-dien-26-oic acid (HLDOA). In Ganoderma lucidum (Ling zhi medicinal fungus), this protein is Ganoderic acid synthetase CYP5150L8.